A 204-amino-acid polypeptide reads, in one-letter code: N-(5'-phosphoribosyl)anthranilate isomerase (204 aa).

Belongs to the TrpF family.

The catalysed reaction is N-(5-phospho-beta-D-ribosyl)anthranilate = 1-(2-carboxyphenylamino)-1-deoxy-D-ribulose 5-phosphate. The protein operates within amino-acid biosynthesis; L-tryptophan biosynthesis; L-tryptophan from chorismate: step 3/5. This Bacillus cereus (strain Q1) protein is N-(5'-phosphoribosyl)anthranilate isomerase.